Consider the following 254-residue polypeptide: 3-deoxy-manno-octulosonate cytidylyltransferase (254 aa).

The protein belongs to the KdsB family.

Its subcellular location is the cytoplasm. The enzyme catalyses 3-deoxy-alpha-D-manno-oct-2-ulosonate + CTP = CMP-3-deoxy-beta-D-manno-octulosonate + diphosphate. It participates in nucleotide-sugar biosynthesis; CMP-3-deoxy-D-manno-octulosonate biosynthesis; CMP-3-deoxy-D-manno-octulosonate from 3-deoxy-D-manno-octulosonate and CTP: step 1/1. It functions in the pathway bacterial outer membrane biogenesis; lipopolysaccharide biosynthesis. Activates KDO (a required 8-carbon sugar) for incorporation into bacterial lipopolysaccharide in Gram-negative bacteria. The protein is 3-deoxy-manno-octulosonate cytidylyltransferase of Pseudomonas aeruginosa (strain ATCC 15692 / DSM 22644 / CIP 104116 / JCM 14847 / LMG 12228 / 1C / PRS 101 / PAO1).